The primary structure comprises 660 residues: UvrABC system protein B (660 aa).

The Helicase ATP-binding domain occupies 25 to 183 (EGLNKGLKHQ…ALINIHYERN (159 aa)). An ATP-binding site is contributed by 38–45 (GVTGSGKT). A Beta-hairpin motif is present at residues 91-114 (YYDYYQPEAYLPTTDTYIEKDSSV). Positions 431–593 (QIDDLIGEVN…IVPQTIHKAL (163 aa)) constitute a Helicase C-terminal domain. The 36-residue stretch at 622-657 (ADMVIELEAEMHLAAKNLEFERAAALRDNIKELRST) folds into the UVR domain.

This sequence belongs to the UvrB family. Forms a heterotetramer with UvrA during the search for lesions. Interacts with UvrC in an incision complex.

The protein resides in the cytoplasm. The UvrABC repair system catalyzes the recognition and processing of DNA lesions. A damage recognition complex composed of 2 UvrA and 2 UvrB subunits scans DNA for abnormalities. Upon binding of the UvrA(2)B(2) complex to a putative damaged site, the DNA wraps around one UvrB monomer. DNA wrap is dependent on ATP binding by UvrB and probably causes local melting of the DNA helix, facilitating insertion of UvrB beta-hairpin between the DNA strands. Then UvrB probes one DNA strand for the presence of a lesion. If a lesion is found the UvrA subunits dissociate and the UvrB-DNA preincision complex is formed. This complex is subsequently bound by UvrC and the second UvrB is released. If no lesion is found, the DNA wraps around the other UvrB subunit that will check the other stand for damage. In Methanococcoides burtonii (strain DSM 6242 / NBRC 107633 / OCM 468 / ACE-M), this protein is UvrABC system protein B.